The chain runs to 506 residues: Cysteine--tRNA ligase (506 aa).

Cys-34 contacts Zn(2+). The 'HIGH' region signature appears at 36 to 46 (PTVYDFAHIGN). Residues Cys-230, His-269, and Glu-273 each coordinate Zn(2+). The 'KMSKS' region motif lies at 302-306 (KMSKS). Lys-305 serves as a coordination point for ATP.

It belongs to the class-I aminoacyl-tRNA synthetase family. In terms of assembly, monomer. The cofactor is Zn(2+).

It localises to the cytoplasm. The catalysed reaction is tRNA(Cys) + L-cysteine + ATP = L-cysteinyl-tRNA(Cys) + AMP + diphosphate. The protein is Cysteine--tRNA ligase of Brucella suis biovar 1 (strain 1330).